A 290-amino-acid polypeptide reads, in one-letter code: 4-hydroxybenzoate octaprenyltransferase (290 aa).

Transmembrane regions (helical) follow at residues 41–61 (WPLL…GCAM), 89–109 (WEAV…IQPL), 133–153 (FFAI…PMAF), 158–178 (DTVP…SVAY), 202–224 (FGRF…YVWI), and 269–289 (WLGG…GTAG).

It belongs to the UbiA prenyltransferase family. It depends on Mg(2+) as a cofactor.

The protein resides in the cell inner membrane. It catalyses the reaction all-trans-octaprenyl diphosphate + 4-hydroxybenzoate = 4-hydroxy-3-(all-trans-octaprenyl)benzoate + diphosphate. It functions in the pathway cofactor biosynthesis; ubiquinone biosynthesis. Functionally, catalyzes the prenylation of para-hydroxybenzoate (PHB) with an all-trans polyprenyl group. Mediates the second step in the final reaction sequence of ubiquinone-8 (UQ-8) biosynthesis, which is the condensation of the polyisoprenoid side chain with PHB, generating the first membrane-bound Q intermediate 3-octaprenyl-4-hydroxybenzoate. This Burkholderia ambifaria (strain ATCC BAA-244 / DSM 16087 / CCUG 44356 / LMG 19182 / AMMD) (Burkholderia cepacia (strain AMMD)) protein is 4-hydroxybenzoate octaprenyltransferase.